The following is a 463-amino-acid chain: L-seryl-tRNA(Sec) selenium transferase (463 aa).

Lys295 carries the N6-(pyridoxal phosphate)lysine modification.

The protein belongs to the SelA family. Homodecamer; pentamer of dimers. Binds only one seryl-tRNA(Sec) per dimer. It depends on pyridoxal 5'-phosphate as a cofactor.

Its subcellular location is the cytoplasm. It catalyses the reaction L-seryl-tRNA(Sec) + selenophosphate + H(+) = L-selenocysteinyl-tRNA(Sec) + phosphate. The protein operates within aminoacyl-tRNA biosynthesis; selenocysteinyl-tRNA(Sec) biosynthesis; selenocysteinyl-tRNA(Sec) from L-seryl-tRNA(Sec) (bacterial route): step 1/1. In terms of biological role, converts seryl-tRNA(Sec) to selenocysteinyl-tRNA(Sec) required for selenoprotein biosynthesis. In Shigella boydii serotype 4 (strain Sb227), this protein is L-seryl-tRNA(Sec) selenium transferase.